The primary structure comprises 346 residues: DNA polymerase IV 2 (346 aa).

Positions 9–191 (ILHVDLDQFL…RTVEALWGVG (183 aa)) constitute a UmuC domain. The Mg(2+) site is built by D13 and D111. E112 is a catalytic residue.

It belongs to the DNA polymerase type-Y family. As to quaternary structure, monomer. Mg(2+) is required as a cofactor.

It is found in the cytoplasm. It catalyses the reaction DNA(n) + a 2'-deoxyribonucleoside 5'-triphosphate = DNA(n+1) + diphosphate. Its function is as follows. Poorly processive, error-prone DNA polymerase involved in untargeted mutagenesis. Copies undamaged DNA at stalled replication forks, which arise in vivo from mismatched or misaligned primer ends. These misaligned primers can be extended by PolIV. Exhibits no 3'-5' exonuclease (proofreading) activity. May be involved in translesional synthesis, in conjunction with the beta clamp from PolIII. The protein is DNA polymerase IV 2 (dinB2) of Mycobacterium bovis (strain ATCC BAA-935 / AF2122/97).